The chain runs to 135 residues: Galectin-1 (135 aa).

Residue Ala2 is modified to N-acetylalanine. Residues 4–135 (GLVASNLNLK…DFKIKCVAFE (132 aa)) enclose the Galectin domain. N6-acetyllysine occurs at positions 13 and 29. Phosphoserine is present on Ser30. A beta-D-galactoside contacts are provided by residues 45–49 (HFNPR), His53, Asn62, and 69–72 (WGAE). An N6-acetyllysine; alternate modification is found at Lys108. The residue at position 108 (Lys108) is an N6-succinyllysine; alternate. N6-acetyllysine is present on Lys128.

In terms of assembly, homodimer. Binds LGALS3BP. Interacts with CD2, CD3, CD4, CD6, CD7, CD43, ALCAM and CD45. Interacts with laminin (via poly-N-acetyllactosamine). Interacts with SUSD2. Interacts with cargo receptor TMED10; the interaction mediates the translocation from the cytoplasm into the ERGIC (endoplasmic reticulum-Golgi intermediate compartment) and thereby secretion.

The protein localises to the secreted. Its subcellular location is the extracellular space. It is found in the extracellular matrix. It localises to the cytoplasm. In terms of biological role, lectin that binds beta-galactoside and a wide array of complex carbohydrates. Plays a role in regulating apoptosis, cell proliferation and cell differentiation. Inhibits CD45 protein phosphatase activity and therefore the dephosphorylation of Lyn kinase. Strong inducer of T-cell apoptosis. The chain is Galectin-1 (LGALS1) from Ovis aries (Sheep).